A 186-amino-acid chain; its full sequence is Nicotinamide-nucleotide adenylyltransferase (186 aa).

The protein belongs to the archaeal NMN adenylyltransferase family.

The protein localises to the cytoplasm. The enzyme catalyses beta-nicotinamide D-ribonucleotide + ATP + H(+) = diphosphate + NAD(+). It participates in cofactor biosynthesis; NAD(+) biosynthesis; NAD(+) from nicotinamide D-ribonucleotide: step 1/1. This chain is Nicotinamide-nucleotide adenylyltransferase, found in Pyrococcus abyssi (strain GE5 / Orsay).